The following is a 429-amino-acid chain: Glutamate-1-semialdehyde 2,1-aminomutase (429 aa).

An N6-(pyridoxal phosphate)lysine modification is found at K265.

This sequence belongs to the class-III pyridoxal-phosphate-dependent aminotransferase family. HemL subfamily. Homodimer. Requires pyridoxal 5'-phosphate as cofactor.

Its subcellular location is the cytoplasm. The enzyme catalyses (S)-4-amino-5-oxopentanoate = 5-aminolevulinate. It participates in porphyrin-containing compound metabolism; protoporphyrin-IX biosynthesis; 5-aminolevulinate from L-glutamyl-tRNA(Glu): step 2/2. This is Glutamate-1-semialdehyde 2,1-aminomutase from Acidobacterium capsulatum (strain ATCC 51196 / DSM 11244 / BCRC 80197 / JCM 7670 / NBRC 15755 / NCIMB 13165 / 161).